The primary structure comprises 1803 residues: 6-methylsalicylic acid synthase (1803 aa).

Residues 1-40 (MEVHGDEVLSVDSGVSTPPSTGSGFRRPLETPGTEIGNLN) form a disordered region. Positions 13–24 (SGVSTPPSTGSG) are enriched in low complexity. The Ketosynthase family 3 (KS3) domain occupies 44 to 470 (QNEVAVVGMA…GTVSHAIIEE (427 aa)). Residues C216, H351, and H391 each act as for beta-ketoacyl synthase activity in the active site. A Malonyl-CoA:ACP transacylase (MAT) domain is found at 581–894 (VWVFSGHGAQ…SIAQLHCRGA (314 aa)). S667 acts as the For malonyltransferase activity in catalysis. The N-terminal hotdog fold stretch occupies residues 940 to 1058 (HTLLGQRVPV…GQWEAGGSKN (119 aa)). The region spanning 940-1218 (HTLLGQRVPV…FSEIEGTPGS (279 aa)) is the PKS/mFAS DH domain. Catalysis depends on H972, which acts as the Proton acceptor; for thioesterase activity. The C-terminal hotdog fold stretch occupies residues 1073–1218 (ANNKLADNFS…FSEIEGTPGS (146 aa)). Residue D1129 is the Proton donor; for thioesterase activity of the active site. The segment at 1141–1262 (TSVGSTLFFD…KNVADLYCGS (122 aa)) is required for homotetramer formation. Positions 1434 to 1628 (STYLITGGLG…AVAVQWTSWR (195 aa)) constitute a Ketoreductase (KR) domain. A compositionally biased stretch (low complexity) spans 1701–1710 (ASSADAPSAA). Residues 1701–1721 (ASSADAPSAAPKETNEMPESI) are disordered. A Carrier domain is found at 1726 to 1801 (TWLDERIRDC…HLVGWFLEKM (76 aa)). The residue at position 1761 (S1761) is an O-(pantetheine 4'-phosphoryl)serine. A required for catalytic activity region spans residues 1783 to 1803 (LTWSCPTVSHLVGWFLEKMGN).

In terms of assembly, homotetramer.

The catalysed reaction is 3 malonyl-CoA + acetyl-CoA + NADPH + 3 H(+) = 6-methylsalicylate + 3 CO2 + NADP(+) + 4 CoA + H2O. It functions in the pathway secondary metabolite biosynthesis. Its function is as follows. 6-methylsalicylic acid synthase; part of the gene cluster that mediates the biosynthesis of terreic acid, a quinone epoxide inhibitor of Bruton's tyrosine kinase. The first step of the pathway is the synthesis of 6-methylsalicylic acid (6-MSA) by the 6-methylsalicylic acid synthase atX. In the biosynthesis of 6-MSA, atX utilizes one acetyl-CoA and three malonyl-CoAs as its substrates and catalyzes a series of programmed reactions including Claisen condensation, reduction, aldol cyclization, and the hydrolytic cleavage that yields 6-MSA. The 6-methylsalicylate 1-monooxygenase atA then catalyzes the decarboxylative hydroxylation of 6-MSA to 3-methylcatechol. The next step is the conversion of 3-methylcatechol to 3-methyl-1,2,4-benzenetriol by cytochrome P450 monooxygenase atE, which is enhanced by cytochrome P450 monooxygenase atG. Then, the epoxidase atD catalyzes the epoxidation and hydroxyl oxidation of 3-methyl-1,2,4-benzenetriol to terremutin. Lastly, GMC oxidoreductase atC oxidizes terremutin to terreic acid. In Aspergillus terreus (strain NIH 2624 / FGSC A1156), this protein is 6-methylsalicylic acid synthase.